Consider the following 515-residue polypeptide: Fatty acyl-CoA reductase 1 (515 aa).

Topologically, residues 1–465 (MVSIPEYYEG…ARKHLNKLRN (465 aa)) are cytoplasmic. The tract at residues 451 to 507 (SGLPAARKHLNKLRNIRYGFNTILVILIWRIFIARSQMARNIWYFVVSLCYKFLSYF) is necessary and sufficient for PEX19-mediated localization into peroxisome membrane. Residues 466-483 (IRYGFNTILVILIWRIFI) traverse the membrane as a helical segment. Residues 484–515 (ARSQMARNIWYFVVSLCYKFLSYFRASSTMRY) lie on the Peroxisomal side of the membrane.

It belongs to the fatty acyl-CoA reductase family. Interacts with PEX19; PEX19 mediates the targeting of FAR1 to peroxisomes.

It localises to the peroxisome membrane. It catalyses the reaction a long-chain fatty acyl-CoA + 2 NADPH + 2 H(+) = a long-chain primary fatty alcohol + 2 NADP(+) + CoA. It carries out the reaction hexadecanoyl-CoA + 2 NADPH + 2 H(+) = hexadecan-1-ol + 2 NADP(+) + CoA. The enzyme catalyses octadecanoyl-CoA + 2 NADPH + 2 H(+) = octadecan-1-ol + 2 NADP(+) + CoA. The catalysed reaction is (9Z)-octadecenoyl-CoA + 2 NADPH + 2 H(+) = (9Z)-octadecen-1-ol + 2 NADP(+) + CoA. It catalyses the reaction (9Z,12Z)-octadecadienoyl-CoA + 2 NADPH + 2 H(+) = (9Z,12Z)-octadecadien-1-ol + 2 NADP(+) + CoA. It carries out the reaction eicosanoyl-CoA + 2 NADPH + 2 H(+) = eicosan-1-ol + 2 NADP(+) + CoA. The enzyme catalyses 16-methylheptadecanoyl-CoA + 2 NADPH + 2 H(+) = 16-methylheptadecan-1-ol + 2 NADP(+) + CoA. The catalysed reaction is 18-methylnonadecanoyl-CoA + 2 NADPH + 2 H(+) = 18-methylnonadecan-1-ol + 2 NADP(+) + CoA. In terms of biological role, catalyzes the reduction of saturated and unsaturated C16 or C18 fatty acyl-CoA to fatty alcohols. It plays an essential role in the production of ether lipids/plasmalogens which synthesis requires fatty alcohols. In parallel, it is also required for wax monoesters production since fatty alcohols also constitute a substrate for their synthesis. Catalyzes the reduction of saturated and unsaturated C16 or C18 fatty acyl-CoA to fatty alcohols. It plays an essential role in the production of ether lipids/plasmalogens which synthesis requires fatty alcohols. In parallel, it is also required for wax monoesters production since fatty alcohols also constitute a substrate for their synthesis. The protein is Fatty acyl-CoA reductase 1 of Rattus norvegicus (Rat).